The chain runs to 473 residues: Chromosomal replication initiator protein DnaA (473 aa).

The domain I, interacts with DnaA modulators stretch occupies residues 1 to 76 (MNYHSTNVNE…RTVLGRVIGP (76 aa)). The segment at 76–135 (PNASLQYNALVDNSSPKYPGTVTLAGCADGGQAAEQFDVNLLHRHMPNAATHSEAQDFDT) is domain II. Residues 136 to 353 (QLNSRLNFRN…GTLVSLITNS (218 aa)) are domain III, AAA+ region. The ATP site is built by Gly181, Gly183, Lys184, and Thr185. Positions 354-473 (VVVGKEIDLT…VERAEQLIAN (120 aa)) are domain IV, binds dsDNA.

This sequence belongs to the DnaA family. Oligomerizes as a right-handed, spiral filament on DNA at oriC.

Its subcellular location is the cytoplasm. Its function is as follows. Plays an essential role in the initiation and regulation of chromosomal replication. ATP-DnaA binds to the origin of replication (oriC) to initiate formation of the DNA replication initiation complex once per cell cycle. Binds the DnaA box (a 9 base pair repeat at the origin) and separates the double-stranded (ds)DNA. Forms a right-handed helical filament on oriC DNA; dsDNA binds to the exterior of the filament while single-stranded (ss)DNA is stabiized in the filament's interior. The ATP-DnaA-oriC complex binds and stabilizes one strand of the AT-rich DNA unwinding element (DUE), permitting loading of DNA polymerase. After initiation quickly degrades to an ADP-DnaA complex that is not apt for DNA replication. Binds acidic phospholipids. This chain is Chromosomal replication initiator protein DnaA, found in Porphyromonas gingivalis (strain ATCC 33277 / DSM 20709 / CIP 103683 / JCM 12257 / NCTC 11834 / 2561).